The following is a 353-amino-acid chain: Adenine deaminase (353 aa).

3 residues coordinate Zn(2+): H19, H21, and H208. E211 (proton donor) is an active-site residue. D289 is a binding site for Zn(2+). D290 is a binding site for substrate.

The protein belongs to the metallo-dependent hydrolases superfamily. Adenosine and AMP deaminases family. Adenine deaminase type 2 subfamily. Requires Zn(2+) as cofactor.

It is found in the cytoplasm. It localises to the nucleus. The catalysed reaction is adenine + H2O + H(+) = hypoxanthine + NH4(+). Catalyzes the hydrolytic deamination of adenine to hypoxanthine. Plays an important role in the purine salvage pathway and in nitrogen catabolism. This is Adenine deaminase from Gibberella zeae (strain ATCC MYA-4620 / CBS 123657 / FGSC 9075 / NRRL 31084 / PH-1) (Wheat head blight fungus).